The primary structure comprises 241 residues: LexA repressor (241 aa).

Residues 41 to 61 constitute a DNA-binding region (H-T-H motif); it reads FREIGNAAGLKSPSSVKHQLQ. Active-site for autocatalytic cleavage activity residues include Ser-165 and Lys-202.

This sequence belongs to the peptidase S24 family. Homodimer.

It catalyses the reaction Hydrolysis of Ala-|-Gly bond in repressor LexA.. Represses a number of genes involved in the response to DNA damage (SOS response), including recA and lexA. In the presence of single-stranded DNA, RecA interacts with LexA causing an autocatalytic cleavage which disrupts the DNA-binding part of LexA, leading to derepression of the SOS regulon and eventually DNA repair. This Bifidobacterium longum subsp. infantis (strain ATCC 15697 / DSM 20088 / JCM 1222 / NCTC 11817 / S12) protein is LexA repressor.